The following is a 346-amino-acid chain: MALLKVKFDQKKRVKLAQGLWLMNWLSVLAGIVIFSLGLFLKIELRKRSDVMNNSESHFVPNSLIVMGVLSCVFNSLAGKICYDALDPAKYAKWKPWLKPYLAVCVLFNIALFLVTLCCFLMRGSLESTLAHGLKNGMKYYRDTDTPGRCFMKKTIDMLQIEFRCCGNNGFRDWFEIQWISNRYLDFSSKEVKDRIKSNVDGRYLVDGVPFSCCNPSSPRPCIQYQLTNNSAHYSYDHQTEELNLWVNGCRAALLSYYSSLMNSMGAVTLLVWLFEVTITIGLRYLHTALEGVSNPEDPECESEGWLLEKSVSETWKAFLESLKKLGKSNQVEAEGADAGQAPEAG.

At 1–24 (MALLKVKFDQKKRVKLAQGLWLMN) the chain is on the cytoplasmic side. Residues 25-43 (WLSVLAGIVIFSLGLFLKI) form a helical membrane-spanning segment. Residues 44-61 (ELRKRSDVMNNSESHFVP) lie on the Lumenal side of the membrane. Asparagine 53 carries N-linked (GlcNAc...) asparagine glycosylation. Residues 62–80 (NSLIVMGVLSCVFNSLAGK) form a helical membrane-spanning segment. Residues 81 to 99 (ICYDALDPAKYAKWKPWLK) lie on the Cytoplasmic side of the membrane. Residues 100 to 123 (PYLAVCVLFNIALFLVTLCCFLMR) traverse the membrane as a helical segment. Residues 124–264 (GSLESTLAHG…LSYYSSLMNS (141 aa)) lie on the Lumenal side of the membrane. The N-linked (GlcNAc...) asparagine glycan is linked to asparagine 229. Residues 265 to 290 (MGAVTLLVWLFEVTITIGLRYLHTAL) traverse the membrane as a helical segment. Topologically, residues 291–346 (EGVSNPEDPECESEGWLLEKSVSETWKAFLESLKKLGKSNQVEAEGADAGQAPEAG) are cytoplasmic. Positions 341–346 (QAPEAG) are interaction with MREG.

Belongs to the PRPH2/ROM1 family. In terms of assembly, homodimer; disulfide-linked. Forms a homotetramer. Forms a heterotetramer with ROM1. Homotetramer and heterotetramer core complexes go on to form higher order complexes by formation of intermolecular disulfide bonds. Interacts with MREG. Interacts with STX3. Interacts with SNAP25. In terms of tissue distribution, retina (photoreceptor). In rim region of ROS (rod outer segment) disks.

The protein localises to the membrane. Its subcellular location is the cell projection. It localises to the cilium. The protein resides in the photoreceptor outer segment. It is found in the photoreceptor inner segment. Its function is as follows. Essential for retina photoreceptor outer segment disk morphogenesis, may also play a role with ROM1 in the maintenance of outer segment disk structure. Required for the maintenance of retinal outer nuclear layer thickness. Required for the correct development and organization of the photoreceptor inner segment. In Canis lupus familiaris (Dog), this protein is Peripherin-2 (PRPH2).